A 178-amino-acid chain; its full sequence is DNA-directed RNA polymerase subunit beta (178 aa).

This sequence belongs to the RNA polymerase beta chain family. In terms of assembly, the RNAP catalytic core consists of 2 alpha, 1 beta, 1 beta' and 1 omega subunit. When a sigma factor is associated with the core the holoenzyme is formed, which can initiate transcription.

It catalyses the reaction RNA(n) + a ribonucleoside 5'-triphosphate = RNA(n+1) + diphosphate. Functionally, DNA-dependent RNA polymerase catalyzes the transcription of DNA into RNA using the four ribonucleoside triphosphates as substrates. The sequence is that of DNA-directed RNA polymerase subunit beta (rpoB) from Liberibacter asiaticus (Citrus greening disease).